The sequence spans 450 residues: ATP-dependent protease ATPase subunit HslU (450 aa).

Residues valine 29, 71 to 76 (GVGKTE), aspartate 261, glutamate 328, and arginine 400 each bind ATP.

Belongs to the ClpX chaperone family. HslU subfamily. A double ring-shaped homohexamer of HslV is capped on each side by a ring-shaped HslU homohexamer. The assembly of the HslU/HslV complex is dependent on binding of ATP.

The protein resides in the cytoplasm. In terms of biological role, ATPase subunit of a proteasome-like degradation complex; this subunit has chaperone activity. The binding of ATP and its subsequent hydrolysis by HslU are essential for unfolding of protein substrates subsequently hydrolyzed by HslV. HslU recognizes the N-terminal part of its protein substrates and unfolds these before they are guided to HslV for hydrolysis. This Rickettsia peacockii (strain Rustic) protein is ATP-dependent protease ATPase subunit HslU.